A 788-amino-acid polypeptide reads, in one-letter code: MAPPAAAAAVTLGGKGAALTPAAVYALSHGLADPAIDCCASPLVRVADAVAALSCEAARGDVAAFDVPTSGDGLSAKDEADVAADVKMLLFGSKLVGAAGGADAASFTKVPTVNGIFREAVRALHARVRIELNAPVKLGKRDAVQTGEGKEEALVALATQLARPVQAMLKLSVARARLCVARIDDAELRKKLTDGVEIDDLKGMLGKVTIDSDAVSVLRGVYNSLLKFRDILAWEAAVAMAVIEMDSSIEKPQACEENEAGSSTENPHASGEKPKGDKKSKKKKTLGKGTSAVLMLLRDLVTNGKEVLSVNSALLAEWGTELSLLFDPKCPRLVSLVDKVKEIVETNEVRRLPKIPKGTRDFGKEQMAIREHAFSIITGVFKMHGAVSLDTPVFELRETLMGKYGEDSKLIYDLADQGGELCSLRYDLTVPFARYVAMNNISSLKRYQIAKVYRRDNPSKGRYREFYQCDFDIAGVYETMEPDFEVIKVLTELLDQLDIGTYEIKLNHRKLLDGMLEICGVPPEKFRTVCSSIDKLDKQTFEQVKKELVDEKGISNETADKIGDLVKTRGPPLEVLLELRKEGSKFMGNAGSVTALNELEILFKALDKANAIGKIVFDLSLARGLDYYTGVIYEAVFKGTTQVGSIAAGGRYDNLVGMFSGKQVPAVGVSLGIERVFAIMEQQEMEKNQIRATETEVLVSIIGKDLILAAELVSELWNAGIKAEFKLTTRIQNHLKYATQSGIPWMVLVGESEISSGKVKLKNLAASQEEEVDRTEFAQVLKQKLRNP.

Residues 252–286 (PQACEENEAGSSTENPHASGEKPKGDKKSKKKKTL) are disordered.

It belongs to the class-II aminoacyl-tRNA synthetase family. Homodimer.

The enzyme catalyses tRNA(His) + L-histidine + ATP = L-histidyl-tRNA(His) + AMP + diphosphate + H(+). The chain is Histidine--tRNA ligase, cytoplasmic from Oryza sativa subsp. japonica (Rice).